A 75-amino-acid polypeptide reads, in one-letter code: DNA-directed RNA polymerase subunit Rpo5 (75 aa).

It belongs to the archaeal Rpo5/eukaryotic RPB5 RNA polymerase subunit family. As to quaternary structure, part of the RNA polymerase complex.

The protein resides in the cytoplasm. The enzyme catalyses RNA(n) + a ribonucleoside 5'-triphosphate = RNA(n+1) + diphosphate. In terms of biological role, DNA-dependent RNA polymerase (RNAP) catalyzes the transcription of DNA into RNA using the four ribonucleoside triphosphates as substrates. This is DNA-directed RNA polymerase subunit Rpo5 from Pyrobaculum aerophilum (strain ATCC 51768 / DSM 7523 / JCM 9630 / CIP 104966 / NBRC 100827 / IM2).